Here is a 205-residue protein sequence, read N- to C-terminus: Guanylate kinase (205 aa).

In terms of domain architecture, Guanylate kinase-like spans 18–196 (PKLFIISAPA…AYQVLRSIFI (179 aa)). Residue 25–32 (APAGAGKT) coordinates ATP.

The protein belongs to the guanylate kinase family.

The protein resides in the cytoplasm. The enzyme catalyses GMP + ATP = GDP + ADP. In terms of biological role, essential for recycling GMP and indirectly, cGMP. This chain is Guanylate kinase (gmk), found in Chlamydia trachomatis serovar D (strain ATCC VR-885 / DSM 19411 / UW-3/Cx).